A 636-amino-acid chain; its full sequence is Polyadenylate-binding protein 1 (636 aa).

M1 is subject to N-acetylmethionine. RRM domains are found at residues 11–89 (ASLY…WSQR), 99–175 (GNIF…RFKS), 191–268 (TNVY…RAQK), and 294–370 (VNLY…LAQR). The segment at 166–289 (RKVFVGRFKS…FEQMKQDRIT (124 aa)) is CSDE1-binding. K299 carries the post-translational modification N6-methyllysine. A Phosphoserine modification is found at S315. T319 bears the Phosphothreonine mark. An omega-N-methylarginine mark is found at R385, R419, R432, and R436. Omega-N-methylated arginine; by CARM1 occurs at positions 455 and 460. Residues R475 and R481 each carry the omega-N-methylarginine modification. An Asymmetric dimethylarginine; alternate modification is found at R493. R493 carries the dimethylated arginine; alternate modification. Position 493 is an omega-N-methylarginine; alternate (R493). Omega-N-methylarginine is present on R506. K512 is subject to N6-acetyllysine. Residue R518 is modified to Omega-N-methylarginine. Residues 542-619 (QEPLTASMLA…AVAVLQAHQA (78 aa)) form the PABC domain.

It belongs to the polyadenylate-binding protein type-1 family. In terms of assembly, may form homodimers. Component of a multisubunit autoregulatory ribonucleoprotein complex (ARC), at least composed of IGF2BP1, PABPC1 and CSDE1. Directly interacts with IGF2BP1. Part of a complex associated with the FOS mCRD domain and consisting of HNRPD, SYNCRIP, PAIP1 and CSDE1/UNR. Interacts with PAIP1 and PAIP2 (via the PABPC1-interacting motifs PAM1 and PAM2). Interacts with PAIP1 with a 1:1 stoichiometry and with PAIP2 with a 1:2 stoichiometry. The interaction with CSDE1 is direct and RNA-independent. Found in a mRNP complex with YBX2. Interacts with TENT2/GLD2. Identified in the spliceosome C complex. Identified in a mRNP complex, at least composed of DHX9, DDX3X, ELAVL1, HNRNPU, IGF2BP1, ILF3, PABPC1, PCBP2, PTBP2, STAU1, STAU2, SYNCRIP and YBX1. The interaction with DDX3X is direct and RNA-independent. This interaction increases in stressed cells and decreases during cell recovery. Identified in a IGF2BP1-dependent mRNP granule complex containing untranslated mRNAs. Interacts with NXF1/TAP. Interacts with PIWIL1. Interacts with AGO1, AGO2, GSPT1 and GSPT2. Interacts with LARP4B. Interacts (via the second and third RRM domains and the C-terminus) with PAIP2B (via central acidic portion and C-terminus). Forms a complex with LARP1 and SHFL. Interacts with LARP4. Interacts with ZFC3H1 in a RNase-sensitive manner. Interacts with TRIM71 (via NHL repeats) in an RNA-dependent manner. Interacts with TENT5C; the interaction has no effect on TENT5C poly(A) polymerase function. Interacts with G3BP1 and G3BP2. Interacts with ENDOV; the interaction is RNA-dependent and stimulates ENDOV activity. Interacts with UPF1; the interaction is RNA-dependent. Interacts with IGF2BP2 and IGF2BP3. May interact with SETX. Interacts with RBM46. Interacts with PAN3. Phosphorylated by MAPKAPK2. In terms of processing, methylated by CARM1. Arg-493 is dimethylated, probably to asymmetric dimethylarginine.

It localises to the cytoplasm. Its subcellular location is the stress granule. The protein resides in the nucleus. The protein localises to the cell projection. It is found in the lamellipodium. Binds the poly(A) tail of mRNA, including that of its own transcript, and regulates processes of mRNA metabolism such as pre-mRNA splicing and mRNA stability. Its function in translational initiation regulation can either be enhanced by PAIP1 or repressed by PAIP2. Can probably bind to cytoplasmic RNA sequences other than poly(A) in vivo. Binds to N6-methyladenosine (m6A)-containing mRNAs and contributes to MYC stability by binding to m6A-containing MYC mRNAs. Involved in translationally coupled mRNA turnover. Implicated with other RNA-binding proteins in the cytoplasmic deadenylation/translational and decay interplay of the FOS mRNA mediated by the major coding-region determinant of instability (mCRD) domain. Involved in regulation of nonsense-mediated decay (NMD) of mRNAs containing premature stop codons; for the recognition of premature termination codons (PTC) and initiation of NMD a competitive interaction between UPF1 and PABPC1 with the ribosome-bound release factors is proposed. By binding to long poly(A) tails, may protect them from uridylation by ZCCHC6/ZCCHC11 and hence contribute to mRNA stability. This Bos taurus (Bovine) protein is Polyadenylate-binding protein 1 (PABPC1).